Here is a 237-residue protein sequence, read N- to C-terminus: Ribosomal RNA small subunit methyltransferase G (237 aa).

S-adenosyl-L-methionine contacts are provided by residues Gly78, Phe83, 129 to 130 (AE), and Arg148.

The protein belongs to the methyltransferase superfamily. RNA methyltransferase RsmG family.

The protein resides in the cytoplasm. Its function is as follows. Specifically methylates the N7 position of a guanine in 16S rRNA. The sequence is that of Ribosomal RNA small subunit methyltransferase G from Streptococcus pyogenes serotype M4 (strain MGAS10750).